The chain runs to 262 residues: Dihydroorotate dehydrogenase B (NAD(+)), electron transfer subunit (262 aa).

One can recognise an FAD-binding FR-type domain in the interval 3–104 (QLQEMMTVVS…MGPLGNGFPV (102 aa)). FAD contacts are provided by residues 53–56 (RPIS), 70–72 (LYR), and 79–80 (GT). Residues C226, C231, C234, and C249 each contribute to the [2Fe-2S] cluster site.

Belongs to the PyrK family. As to quaternary structure, heterotetramer of 2 PyrK and 2 PyrD type B subunits. [2Fe-2S] cluster serves as cofactor. Requires FAD as cofactor.

The protein operates within pyrimidine metabolism; UMP biosynthesis via de novo pathway; orotate from (S)-dihydroorotate (NAD(+) route): step 1/1. Responsible for channeling the electrons from the oxidation of dihydroorotate from the FMN redox center in the PyrD type B subunit to the ultimate electron acceptor NAD(+). This chain is Dihydroorotate dehydrogenase B (NAD(+)), electron transfer subunit, found in Lactococcus lactis subsp. cremoris (strain SK11).